The primary structure comprises 139 residues: Ubiquitin-conjugating enzyme spm2 (139 aa).

Positions proline 5 to phenylalanine 139 constitute a UBC core domain.

It belongs to the ubiquitin-conjugating enzyme family. In terms of assembly, heterodimer with ubc13.

Has a role in the DNA error-free postreplication repair (PRR) pathway. Lacks catalytic activity by itself. The ubc13/spm2 heterodimer catalyzes the synthesis of non-canonical poly-ubiquitin chains that are linked through 'Lys-63'. The polypeptide is Ubiquitin-conjugating enzyme spm2 (spm2) (Schizosaccharomyces pombe (strain 972 / ATCC 24843) (Fission yeast)).